A 1075-amino-acid chain; its full sequence is Carbamoyl phosphate synthase large chain (1075 aa).

The interval 1-403 is carboxyphosphate synthetic domain; that stretch reads MPKRTDINTI…SLQKALRGLE (403 aa). ATP contacts are provided by arginine 129, arginine 169, glycine 175, glycine 176, glutamine 208, valine 210, glutamate 215, glycine 241, valine 242, histidine 243, glutamine 285, and glutamate 299. Residues 133–328 form the ATP-grasp 1 domain; it reads KDAMTKIGLN…IAKVAAKLAV (196 aa). Mg(2+) contacts are provided by glutamine 285, glutamate 299, and asparagine 301. Mn(2+) contacts are provided by glutamine 285, glutamate 299, and asparagine 301. An oligomerization domain region spans residues 404-548; that stretch reads IGICGFNLRS…YSTYEDECEA (145 aa). Residues 549–930 are carbamoyl phosphate synthetic domain; it reads KPTTRQKVMI…AYYKAQLGAG (382 aa). One can recognise an ATP-grasp 2 domain in the interval 673-864; the sequence is QKILTDLGLK…LAKIAALVMA (192 aa). The ATP site is built by arginine 709, histidine 748, leucine 750, glutamate 755, glycine 780, isoleucine 781, histidine 782, serine 783, glutamine 823, and glutamate 835. Mg(2+)-binding residues include glutamine 823, glutamate 835, and asparagine 837. The Mn(2+) site is built by glutamine 823, glutamate 835, and asparagine 837. The region spanning 931–1070 is the MGS-like domain; the sequence is ERIPSTGKVF…QQLHLSSALA (140 aa). Positions 931-1075 are allosteric domain; sequence ERIPSTGKVF…SSALANQITR (145 aa).

This sequence belongs to the CarB family. In terms of assembly, composed of two chains; the small (or glutamine) chain promotes the hydrolysis of glutamine to ammonia, which is used by the large (or ammonia) chain to synthesize carbamoyl phosphate. Tetramer of heterodimers (alpha,beta)4. Mg(2+) is required as a cofactor. It depends on Mn(2+) as a cofactor.

The enzyme catalyses hydrogencarbonate + L-glutamine + 2 ATP + H2O = carbamoyl phosphate + L-glutamate + 2 ADP + phosphate + 2 H(+). It catalyses the reaction hydrogencarbonate + NH4(+) + 2 ATP = carbamoyl phosphate + 2 ADP + phosphate + 2 H(+). Its pathway is amino-acid biosynthesis; L-arginine biosynthesis; carbamoyl phosphate from bicarbonate: step 1/1. The protein operates within pyrimidine metabolism; UMP biosynthesis via de novo pathway; (S)-dihydroorotate from bicarbonate: step 1/3. In terms of biological role, large subunit of the glutamine-dependent carbamoyl phosphate synthetase (CPSase). CPSase catalyzes the formation of carbamoyl phosphate from the ammonia moiety of glutamine, carbonate, and phosphate donated by ATP, constituting the first step of 2 biosynthetic pathways, one leading to arginine and/or urea and the other to pyrimidine nucleotides. The large subunit (synthetase) binds the substrates ammonia (free or transferred from glutamine from the small subunit), hydrogencarbonate and ATP and carries out an ATP-coupled ligase reaction, activating hydrogencarbonate by forming carboxy phosphate which reacts with ammonia to form carbamoyl phosphate. This chain is Carbamoyl phosphate synthase large chain, found in Haemophilus ducreyi (strain 35000HP / ATCC 700724).